We begin with the raw amino-acid sequence, 85 residues long: Colicin E3 immunity protein (85 aa).

The protein belongs to the cloacin immunity protein family. As to quaternary structure, native colicin E3 is a 1:1 complex of A chain and protein B (Im3). Binds between the translocation and cytotoxic RNase domains of intact ColE3, blocking access to the 16S rRNA substrate. Forms a very tight 1:1 complex with the cytotoxic fragment (residues 456-551) of ColE3 (ceaC).

Its function is as follows. The cognate immunity protein for colicin E3 (ColE3), protects cells which harbor the plasmid ColE3 against the toxic action of ColE3. This protein inhibits the 16S RNA hydrolyzing activity of ColE3 by binding with very high affinity to the C-terminal catalytic domain of ColE3. This Escherichia coli protein is Colicin E3 immunity protein.